Reading from the N-terminus, the 356-residue chain is UDP-N-acetylglucosamine--N-acetylmuramyl-(pentapeptide) pyrophosphoryl-undecaprenol N-acetylglucosamine transferase (356 aa).

UDP-N-acetyl-alpha-D-glucosamine is bound by residues Thr-12–Gly-14, Asn-124, Arg-163, Ser-188, Ile-242, and Gln-287.

The protein belongs to the glycosyltransferase 28 family. MurG subfamily.

Its subcellular location is the cell inner membrane. The catalysed reaction is di-trans,octa-cis-undecaprenyl diphospho-N-acetyl-alpha-D-muramoyl-L-alanyl-D-glutamyl-meso-2,6-diaminopimeloyl-D-alanyl-D-alanine + UDP-N-acetyl-alpha-D-glucosamine = di-trans,octa-cis-undecaprenyl diphospho-[N-acetyl-alpha-D-glucosaminyl-(1-&gt;4)]-N-acetyl-alpha-D-muramoyl-L-alanyl-D-glutamyl-meso-2,6-diaminopimeloyl-D-alanyl-D-alanine + UDP + H(+). Its pathway is cell wall biogenesis; peptidoglycan biosynthesis. Functionally, cell wall formation. Catalyzes the transfer of a GlcNAc subunit on undecaprenyl-pyrophosphoryl-MurNAc-pentapeptide (lipid intermediate I) to form undecaprenyl-pyrophosphoryl-MurNAc-(pentapeptide)GlcNAc (lipid intermediate II). The chain is UDP-N-acetylglucosamine--N-acetylmuramyl-(pentapeptide) pyrophosphoryl-undecaprenol N-acetylglucosamine transferase from Pseudomonas syringae pv. tomato (strain ATCC BAA-871 / DC3000).